We begin with the raw amino-acid sequence, 343 residues long: GTP 3',8-cyclase (343 aa).

Positions 19–244 (PFGRNISYLR…TDLDDSTGGP (226 aa)) constitute a Radical SAM core domain. Arg-28 is a binding site for GTP. 2 residues coordinate [4Fe-4S] cluster: Cys-35 and Cys-39. Position 41 (Tyr-41) interacts with S-adenosyl-L-methionine. Cys-42 contacts [4Fe-4S] cluster. Arg-77 lines the GTP pocket. Residue Gly-81 coordinates S-adenosyl-L-methionine. Residue Thr-111 coordinates GTP. Ser-135 contributes to the S-adenosyl-L-methionine binding site. Position 171 (Lys-171) interacts with GTP. Met-205 is a binding site for S-adenosyl-L-methionine. The [4Fe-4S] cluster site is built by Cys-268 and Cys-271. GTP is bound at residue 273–275 (RVR). Cys-285 contributes to the [4Fe-4S] cluster binding site.

This sequence belongs to the radical SAM superfamily. MoaA family. In terms of assembly, monomer and homodimer. The cofactor is [4Fe-4S] cluster.

It catalyses the reaction GTP + AH2 + S-adenosyl-L-methionine = (8S)-3',8-cyclo-7,8-dihydroguanosine 5'-triphosphate + 5'-deoxyadenosine + L-methionine + A + H(+). Its pathway is cofactor biosynthesis; molybdopterin biosynthesis. Catalyzes the cyclization of GTP to (8S)-3',8-cyclo-7,8-dihydroguanosine 5'-triphosphate. The polypeptide is GTP 3',8-cyclase (Nitrobacter winogradskyi (strain ATCC 25391 / DSM 10237 / CIP 104748 / NCIMB 11846 / Nb-255)).